The sequence spans 86 residues: uncharacterized protein (86 aa).

It to M.jannaschii MJ0526.1.

This is an uncharacterized protein from Methanothermobacter thermautotrophicus (strain ATCC 29096 / DSM 1053 / JCM 10044 / NBRC 100330 / Delta H) (Methanobacterium thermoautotrophicum).